We begin with the raw amino-acid sequence, 436 residues long: UPF0597 protein YhaM (436 aa).

This sequence belongs to the UPF0597 family.

The chain is UPF0597 protein YhaM from Escherichia coli O45:K1 (strain S88 / ExPEC).